We begin with the raw amino-acid sequence, 251 residues long: Uridylate kinase (251 aa).

11–14 is a binding site for ATP; it reads KLSG. Residues 19 to 24 are involved in allosteric activation by GTP; it reads GNQGFG. Gly53 contacts UMP. Residues Gly54 and Arg58 each coordinate ATP. UMP is bound by residues Asp73 and 134–141; that span reads TGNPYFTT. ATP contacts are provided by Thr161, Tyr167, and Asp170.

Belongs to the UMP kinase family. As to quaternary structure, homohexamer.

The protein resides in the cytoplasm. It carries out the reaction UMP + ATP = UDP + ADP. The protein operates within pyrimidine metabolism; CTP biosynthesis via de novo pathway; UDP from UMP (UMPK route): step 1/1. With respect to regulation, allosterically activated by GTP. Inhibited by UTP. Functionally, catalyzes the reversible phosphorylation of UMP to UDP. The chain is Uridylate kinase from Protochlamydia amoebophila (strain UWE25).